The chain runs to 234 residues: N-acetyl-alpha-D-glucosaminyl L-malate deacetylase 1 (234 aa).

The Zn(2+) site is built by His12, Asp15, and His113.

Belongs to the PIGL family. It depends on Zn(2+) as a cofactor.

The catalysed reaction is (S)-malyl N-acetyl-alpha-D-glucosaminide + H2O = (S)-malyl alpha-D-glucosaminide + acetate. With respect to regulation, inhibited by BSH. Its function is as follows. Involved in bacillithiol (BSH) biosynthesis. Catalyzes the second step of the pathway, the deacetylation of N-acetylglucosaminylmalate (GlcNAc-Mal) to glucosamine malate (GlcN-Mal). This is N-acetyl-alpha-D-glucosaminyl L-malate deacetylase 1 from Bacillus anthracis.